The chain runs to 215 residues: Variable small protein 6 (215 aa).

Residues 1–18 (MRKRISAIIMTLFMVFMS) form the signal peptide. Cys-19 carries N-palmitoyl cysteine lipidation. Cys-19 carries S-diacylglycerol cysteine lipidation.

It belongs to the variable small protein (Vsp) family.

The protein localises to the cell outer membrane. Functionally, the Vlp and Vsp proteins are antigenically distinct proteins, only one vlp or vsp gene is transcriptionally active at any one time. Switching between these genes is a mechanism of host immune response evasion. The chain is Variable small protein 6 from Borrelia hermsii.